A 119-amino-acid chain; its full sequence is Large ribosomal subunit protein bL20 (119 aa).

The protein belongs to the bacterial ribosomal protein bL20 family.

In terms of biological role, binds directly to 23S ribosomal RNA and is necessary for the in vitro assembly process of the 50S ribosomal subunit. It is not involved in the protein synthesizing functions of that subunit. The chain is Large ribosomal subunit protein bL20 from Alkaliphilus oremlandii (strain OhILAs) (Clostridium oremlandii (strain OhILAs)).